Here is a 306-residue protein sequence, read N- to C-terminus: Secreted RxLR effector protein 76 (306 aa).

An N-terminal signal peptide occupies residues Met1–Ala21. A RxLR-dEER motif is present at residues Arg48 to Arg65. Residues Ala105 to Lys142 are disordered. The span at Lys107–Pro123 shows a compositional bias: basic residues.

The protein belongs to the RxLR effector family.

It is found in the secreted. Its subcellular location is the host nucleus. Its function is as follows. Secreted effector that partially suppresses the host cell death induced by cell death-inducing proteins. This chain is Secreted RxLR effector protein 76, found in Plasmopara viticola (Downy mildew of grapevine).